The sequence spans 372 residues: tRNA-specific 2-thiouridylase MnmA (372 aa).

ATP is bound by residues 6-13 (AMSGGVDS) and Leu-32. Cys-101 functions as the Nucleophile in the catalytic mechanism. An intrachain disulfide couples Cys-101 to Cys-193. Residue Gly-125 participates in ATP binding. Positions 143–145 (KDQ) are interaction with tRNA. Cys-193 serves as the catalytic Cysteine persulfide intermediate.

Belongs to the MnmA/TRMU family.

It is found in the cytoplasm. The enzyme catalyses S-sulfanyl-L-cysteinyl-[protein] + uridine(34) in tRNA + AH2 + ATP = 2-thiouridine(34) in tRNA + L-cysteinyl-[protein] + A + AMP + diphosphate + H(+). Its function is as follows. Catalyzes the 2-thiolation of uridine at the wobble position (U34) of tRNA, leading to the formation of s(2)U34. The protein is tRNA-specific 2-thiouridylase MnmA of Corynebacterium kroppenstedtii (strain DSM 44385 / JCM 11950 / CIP 105744 / CCUG 35717).